The sequence spans 349 residues: Histidinol-phosphate aminotransferase (349 aa).

Residues 1–22 form a disordered region; it reads MVSIRPSVRHTPAYVPGEQPQT. Lys-207 is subject to N6-(pyridoxal phosphate)lysine.

Belongs to the class-II pyridoxal-phosphate-dependent aminotransferase family. Histidinol-phosphate aminotransferase subfamily. Homodimer. It depends on pyridoxal 5'-phosphate as a cofactor.

It carries out the reaction L-histidinol phosphate + 2-oxoglutarate = 3-(imidazol-4-yl)-2-oxopropyl phosphate + L-glutamate. It functions in the pathway amino-acid biosynthesis; L-histidine biosynthesis; L-histidine from 5-phospho-alpha-D-ribose 1-diphosphate: step 7/9. The protein is Histidinol-phosphate aminotransferase (hisC) of Synechocystis sp. (strain ATCC 27184 / PCC 6803 / Kazusa).